The chain runs to 141 residues: Large ribosomal subunit protein uL11 (141 aa).

This sequence belongs to the universal ribosomal protein uL11 family. In terms of assembly, part of the ribosomal stalk of the 50S ribosomal subunit. Interacts with L10 and the large rRNA to form the base of the stalk. L10 forms an elongated spine to which L12 dimers bind in a sequential fashion forming a multimeric L10(L12)X complex. One or more lysine residues are methylated.

Its function is as follows. Forms part of the ribosomal stalk which helps the ribosome interact with GTP-bound translation factors. The polypeptide is Large ribosomal subunit protein uL11 (Microcystis aeruginosa (strain NIES-843 / IAM M-2473)).